A 607-amino-acid polypeptide reads, in one-letter code: UvrABC system protein C (607 aa).

Positions 16–94 (GRPGVYRMFD…IKEWRPPYNI (79 aa)) constitute a GIY-YIG domain. A UVR domain is found at 203 to 238 (QQLGNELNAEMEKAAMALDFEKAAELRDQIALLRRV).

Belongs to the UvrC family. As to quaternary structure, interacts with UvrB in an incision complex.

It localises to the cytoplasm. In terms of biological role, the UvrABC repair system catalyzes the recognition and processing of DNA lesions. UvrC both incises the 5' and 3' sides of the lesion. The N-terminal half is responsible for the 3' incision and the C-terminal half is responsible for the 5' incision. This is UvrABC system protein C from Pseudomonas putida (strain ATCC 47054 / DSM 6125 / CFBP 8728 / NCIMB 11950 / KT2440).